Here is a 212-residue protein sequence, read N- to C-terminus: Thymidylate kinase (212 aa).

11-18 provides a ligand contact to ATP; that stretch reads GLEGAGKT.

This sequence belongs to the thymidylate kinase family.

It carries out the reaction dTMP + ATP = dTDP + ADP. Phosphorylation of dTMP to form dTDP in both de novo and salvage pathways of dTTP synthesis. This is Thymidylate kinase (tmk) from Buchnera aphidicola subsp. Acyrthosiphon pisum (strain APS) (Acyrthosiphon pisum symbiotic bacterium).